Here is a 463-residue protein sequence, read N- to C-terminus: ATP synthase subunit beta (463 aa).

Residue 152–159 (GGAGVGKT) coordinates ATP.

The protein belongs to the ATPase alpha/beta chains family. As to quaternary structure, F-type ATPases have 2 components, CF(1) - the catalytic core - and CF(0) - the membrane proton channel. CF(1) has five subunits: alpha(3), beta(3), gamma(1), delta(1), epsilon(1). CF(0) has three main subunits: a(1), b(2) and c(9-12). The alpha and beta chains form an alternating ring which encloses part of the gamma chain. CF(1) is attached to CF(0) by a central stalk formed by the gamma and epsilon chains, while a peripheral stalk is formed by the delta and b chains.

The protein resides in the cell inner membrane. The enzyme catalyses ATP + H2O + 4 H(+)(in) = ADP + phosphate + 5 H(+)(out). Its function is as follows. Produces ATP from ADP in the presence of a proton gradient across the membrane. The catalytic sites are hosted primarily by the beta subunits. In Shewanella baltica (strain OS223), this protein is ATP synthase subunit beta.